We begin with the raw amino-acid sequence, 255 residues long: Hydroxylmethylpyrimidine kinase (255 aa).

Positions 18, 43, and 110 each coordinate pyridoxal 5'-phosphate. Gln-43 is a binding site for 4-amino-5-hydroxymethyl-2-methylpyrimidine. Cys-195 and Cys-207 are joined by a disulfide. Position 208 (Ser-208) interacts with pyridoxal 5'-phosphate.

The protein belongs to the ThiD family. As to quaternary structure, homodimer. In terms of processing, crystals show a disulfide bond between Cys-195 and Cys-207. This disulfide is possibly an artifact of the purification and crystallization conditions. However, as it is adjacent to the conserved GSGC of the oxyanion hole, this disulfide may help to orient the backbone amides toward the oxanion intermediate.

The enzyme catalyses 4-amino-5-hydroxymethyl-2-methylpyrimidine + ATP = 4-amino-2-methyl-5-(phosphooxymethyl)pyrimidine + ADP + H(+). It functions in the pathway cofactor biosynthesis; thiamine diphosphate biosynthesis. Its activity is regulated as follows. Inhibited by pyridoxal phosphate at high micromolar concentrations. Catalyzes the phosphorylation of hydroxymethylpyrimidine (HMP) to hydroxymethylpyrimidine phosphate (HMP-P). Unlike other HMPKs, it cannot catalyze the phosphorylation of HMP-P to generate the diphosphate HMP-PP. Shows no activity with pyridoxal, pyridoxamine or pyridoxine. Does not show phosphatase activity. The protein is Hydroxylmethylpyrimidine kinase of Acinetobacter baumannii (strain IS-123).